We begin with the raw amino-acid sequence, 334 residues long: Methionine import ATP-binding protein MetN (334 aa).

Residues 7–246 enclose the ABC transporter domain; the sequence is VEFRSVSKVF…PRSAPARAFV (240 aa). 43-50 contacts ATP; it reads GYSGAGKS.

Belongs to the ABC transporter superfamily. Methionine importer (TC 3.A.1.24) family. As to quaternary structure, the complex is composed of two ATP-binding proteins (MetN), two transmembrane proteins (MetI) and a solute-binding protein (MetQ).

The protein resides in the cell membrane. The catalysed reaction is L-methionine(out) + ATP + H2O = L-methionine(in) + ADP + phosphate + H(+). The enzyme catalyses D-methionine(out) + ATP + H2O = D-methionine(in) + ADP + phosphate + H(+). Functionally, part of the ABC transporter complex MetNIQ involved in methionine import. Responsible for energy coupling to the transport system. In Nocardia farcinica (strain IFM 10152), this protein is Methionine import ATP-binding protein MetN.